We begin with the raw amino-acid sequence, 580 residues long: Extracellular protease (580 aa).

The N-terminal stretch at 1–32 (MSTASLRKRTGSLTILGASALTSLLLAMPAFA) is a signal peptide. The propeptide occupies 33–136 (GEVYLDGLAT…VEVDQILHAT (104 aa)). In terms of domain architecture, Peptidase S8 spans 147-465 (QWAFGTTNAG…AGIVNADAAV (319 aa)). Catalysis depends on charge relay system residues D177 and H237. 2 disulfides stabilise this stretch: C225–C273 and C315–C352. Residue S409 is the Charge relay system of the active site. A disulfide bridge connects residues C450 and C454.

Belongs to the peptidase S8 family.

It localises to the secreted. In Xanthomonas campestris pv. campestris (strain ATCC 33913 / DSM 3586 / NCPPB 528 / LMG 568 / P 25), this protein is Extracellular protease.